A 79-amino-acid polypeptide reads, in one-letter code: Keratin-associated protein 21-1 (79 aa).

As to quaternary structure, interacts with hair keratins.

In the hair cortex, hair keratin intermediate filaments are embedded in an interfilamentous matrix, consisting of hair keratin-associated proteins (KRTAP), which are essential for the formation of a rigid and resistant hair shaft through their extensive disulfide bond cross-linking with abundant cysteine residues of hair keratins. The matrix proteins include the high-sulfur and high-glycine-tyrosine keratins. This is Keratin-associated protein 21-1 (KRTAP21-1) from Homo sapiens (Human).